The primary structure comprises 448 residues: N-succinylarginine dihydrolase (448 aa).

Residues glycine 19–serine 28, asparagine 110, and histidine 137–arginine 138 each bind substrate. Residue glutamate 174 is part of the active site. A substrate-binding site is contributed by arginine 214. Histidine 250 is a catalytic residue. Substrate-binding residues include aspartate 252 and asparagine 365. Cysteine 371 (nucleophile) is an active-site residue.

Belongs to the succinylarginine dihydrolase family. In terms of assembly, homodimer.

It catalyses the reaction N(2)-succinyl-L-arginine + 2 H2O + 2 H(+) = N(2)-succinyl-L-ornithine + 2 NH4(+) + CO2. It functions in the pathway amino-acid degradation; L-arginine degradation via AST pathway; L-glutamate and succinate from L-arginine: step 2/5. Catalyzes the hydrolysis of N(2)-succinylarginine into N(2)-succinylornithine, ammonia and CO(2). This Pseudomonas paraeruginosa (strain DSM 24068 / PA7) (Pseudomonas aeruginosa (strain PA7)) protein is N-succinylarginine dihydrolase.